We begin with the raw amino-acid sequence, 76 residues long: Small ribosomal subunit protein bS18 (76 aa).

Belongs to the bacterial ribosomal protein bS18 family. Part of the 30S ribosomal subunit. Forms a tight heterodimer with protein bS6.

Its function is as follows. Binds as a heterodimer with protein bS6 to the central domain of the 16S rRNA, where it helps stabilize the platform of the 30S subunit. This Marinobacter nauticus (strain ATCC 700491 / DSM 11845 / VT8) (Marinobacter aquaeolei) protein is Small ribosomal subunit protein bS18.